Consider the following 65-residue polypeptide: Large ribosomal subunit protein bL35 (65 aa).

This sequence belongs to the bacterial ribosomal protein bL35 family.

In Wolbachia sp. subsp. Brugia malayi (strain TRS), this protein is Large ribosomal subunit protein bL35.